The sequence spans 204 residues: Urease accessory protein UreG (204 aa).

12 to 19 (GPVGSGKT) is a binding site for GTP.

The protein belongs to the SIMIBI class G3E GTPase family. UreG subfamily. As to quaternary structure, homodimer. UreD, UreF and UreG form a complex that acts as a GTP-hydrolysis-dependent molecular chaperone, activating the urease apoprotein by helping to assemble the nickel containing metallocenter of UreC. The UreE protein probably delivers the nickel.

Its subcellular location is the cytoplasm. Functionally, facilitates the functional incorporation of the urease nickel metallocenter. This process requires GTP hydrolysis, probably effectuated by UreG. In Pseudomonas fluorescens (strain ATCC BAA-477 / NRRL B-23932 / Pf-5), this protein is Urease accessory protein UreG.